A 1107-amino-acid chain; its full sequence is Membrane-associated guanylate kinase, WW and PDZ domain-containing protein 3 (1107 aa).

Positions 17–102 constitute a PDZ 1 domain; the sequence is ECGLSGVGGD…PIRLKTVKPG (86 aa). The 175-residue stretch at 110-284 folds into the Guanylate kinase-like domain; the sequence is RHYLSLQFQK…SMDFRNYLTR (175 aa). Position 117-124 (117-124) interacts with ATP; that stretch reads FQKGSIDH. A disordered region spans residues 210 to 277; that stretch reads FDTETQRKRT…SYNQTNSSMD (68 aa). The span at 220–231 shows a compositional bias: polar residues; sequence TSVSKMQRTDSS. A compositionally biased stretch (acidic residues) spans 232–241; it reads LPEEEDEEER. Positions 251 to 261 are enriched in basic and acidic residues; the sequence is TDHRDRQEPSE. Residues 267–277 show a composition bias toward polar residues; it reads PSYNQTNSSMD. WW domains are found at residues 289 to 322 and 335 to 368; these read EPLP…DPRL and GELP…NPVL. Residues 374–398 form a disordered region; it reads KQLNPAPSEGTVHQEPENSQFTRDP. PDZ domains are found at residues 407-489, 577-653, 727-809, and 853-940; these read HTSL…TLCR, TIPL…LILR, DVFL…TVRR, and DVIL…IAEE. The interval 941–975 is disordered; that stretch reads EHRGPPSGSNSARQSPAPQHRPMGQTQPTYGTLDR. Residues 947–957 are compositionally biased toward polar residues; sequence SGSNSARQSPA. In terms of domain architecture, PDZ 6 spans 1003–1085; that stretch reads PVELERGPRG…KVLLLLRPGT (83 aa).

The protein belongs to the MAGUK family.

Its subcellular location is the cell membrane. The protein localises to the cell junction. It is found in the tight junction. Functionally, acts as a scaffolding protein at cell-cell junctions, thereby regulating various cellular and signaling processes. This Xenopus tropicalis (Western clawed frog) protein is Membrane-associated guanylate kinase, WW and PDZ domain-containing protein 3 (magi3).